Here is a 103-residue protein sequence, read N- to C-terminus: Small ribosomal subunit protein uS10 (103 aa).

Belongs to the universal ribosomal protein uS10 family. In terms of assembly, part of the 30S ribosomal subunit.

Functionally, involved in the binding of tRNA to the ribosomes. This is Small ribosomal subunit protein uS10 from Methylibium petroleiphilum (strain ATCC BAA-1232 / LMG 22953 / PM1).